The chain runs to 459 residues: Chromosomal replication initiator protein DnaA (459 aa).

Residues 1–73 (MEIPIESLWS…AHAVQDILGH (73 aa)) are domain I, interacts with DnaA modulators. Residues 73-117 (HPVGIYITVAQGDEVSHFSEREVSWESTNPSSIPESLPHHNHKTT) form a domain II region. The segment at 118-334 (ELNSKYVFSR…GALIRAVAYI (217 aa)) is domain III, AAA+ region. Positions 162, 164, 165, and 166 each coordinate ATP. The interval 335-459 (SIWGLPMTVE…INMTSRSQKS (125 aa)) is domain IV, binds dsDNA.

It belongs to the DnaA family. Oligomerizes as a right-handed, spiral filament on DNA at oriC.

The protein localises to the cytoplasm. Functionally, plays an essential role in the initiation and regulation of chromosomal replication. ATP-DnaA binds to the origin of replication (oriC) to initiate formation of the DNA replication initiation complex once per cell cycle. Binds the DnaA box (a 9 base pair repeat at the origin) and separates the double-stranded (ds)DNA. Forms a right-handed helical filament on oriC DNA; dsDNA binds to the exterior of the filament while single-stranded (ss)DNA is stabiized in the filament's interior. The ATP-DnaA-oriC complex binds and stabilizes one strand of the AT-rich DNA unwinding element (DUE), permitting loading of DNA polymerase. After initiation quickly degrades to an ADP-DnaA complex that is not apt for DNA replication. Binds acidic phospholipids. This is Chromosomal replication initiator protein DnaA from Nostoc punctiforme (strain ATCC 29133 / PCC 73102).